The chain runs to 156 residues: Small ribosomal subunit protein uS7c (156 aa).

This sequence belongs to the universal ribosomal protein uS7 family. Part of the 30S ribosomal subunit.

It localises to the plastid. Its subcellular location is the chloroplast. Its function is as follows. One of the primary rRNA binding proteins, it binds directly to 16S rRNA where it nucleates assembly of the head domain of the 30S subunit. This is Small ribosomal subunit protein uS7c (rps7) from Chlorokybus atmophyticus (Soil alga).